We begin with the raw amino-acid sequence, 71 residues long: General transcription and DNA repair factor IIH subunit TFB5 (71 aa).

The protein belongs to the TFB5 family. Component of the 7-subunit TFIIH core complex.

Its subcellular location is the nucleus. The protein resides in the chromosome. Component of the general transcription and DNA repair factor IIH (TFIIH) core complex, which is involved in general and transcription-coupled nucleotide excision repair (NER) of damaged DNA and in RNA transcription by RNA polymerase II. In NER, TFIIH acts by opening DNA around the lesion to allow the excision of the damaged oligonucleotide and its replacement by a new DNA fragment. In transcription, TFIIH has an essential role in transcription initiation. When the pre-initiation complex (PIC) has been established, TFIIH is required for promoter opening and promoter escape. Necessary for the stability of the TFIIH complex and for the presence of normal levels of TFIIH in the cell. Required for efficient binding of TFIIH to damaged DNA. Dispensable for normal development, but required when transcription is challenged. This chain is General transcription and DNA repair factor IIH subunit TFB5, found in Caenorhabditis elegans.